The sequence spans 313 residues: Porphobilinogen deaminase (313 aa).

Cysteine 240 is modified (S-(dipyrrolylmethanemethyl)cysteine).

Belongs to the HMBS family. Monomer. It depends on dipyrromethane as a cofactor.

It catalyses the reaction 4 porphobilinogen + H2O = hydroxymethylbilane + 4 NH4(+). Its pathway is porphyrin-containing compound metabolism; protoporphyrin-IX biosynthesis; coproporphyrinogen-III from 5-aminolevulinate: step 2/4. Functionally, tetrapolymerization of the monopyrrole PBG into the hydroxymethylbilane pre-uroporphyrinogen in several discrete steps. The sequence is that of Porphobilinogen deaminase from Moorella thermoacetica (strain ATCC 39073 / JCM 9320).